The chain runs to 105 residues: Cell division topological specificity factor (105 aa).

This sequence belongs to the MinE family.

Functionally, prevents the cell division inhibition by proteins MinC and MinD at internal division sites while permitting inhibition at polar sites. This ensures cell division at the proper site by restricting the formation of a division septum at the midpoint of the long axis of the cell. The chain is Cell division topological specificity factor from Prochlorococcus marinus (strain MIT 9515).